We begin with the raw amino-acid sequence, 211 residues long: Thiamine-phosphate synthase (211 aa).

4-amino-2-methyl-5-(diphosphooxymethyl)pyrimidine-binding positions include 43–47 and Asn75; that span reads QLRDK. Asp76 and Asp95 together coordinate Mg(2+). Position 114 (Ser114) interacts with 4-amino-2-methyl-5-(diphosphooxymethyl)pyrimidine. Residue 140–142 participates in 2-[(2R,5Z)-2-carboxy-4-methylthiazol-5(2H)-ylidene]ethyl phosphate binding; sequence TAS. Lys143 contributes to the 4-amino-2-methyl-5-(diphosphooxymethyl)pyrimidine binding site. Residues Gly170 and 190 to 191 contribute to the 2-[(2R,5Z)-2-carboxy-4-methylthiazol-5(2H)-ylidene]ethyl phosphate site; that span reads IS.

The protein belongs to the thiamine-phosphate synthase family. It depends on Mg(2+) as a cofactor.

It catalyses the reaction 2-[(2R,5Z)-2-carboxy-4-methylthiazol-5(2H)-ylidene]ethyl phosphate + 4-amino-2-methyl-5-(diphosphooxymethyl)pyrimidine + 2 H(+) = thiamine phosphate + CO2 + diphosphate. The catalysed reaction is 2-(2-carboxy-4-methylthiazol-5-yl)ethyl phosphate + 4-amino-2-methyl-5-(diphosphooxymethyl)pyrimidine + 2 H(+) = thiamine phosphate + CO2 + diphosphate. It carries out the reaction 4-methyl-5-(2-phosphooxyethyl)-thiazole + 4-amino-2-methyl-5-(diphosphooxymethyl)pyrimidine + H(+) = thiamine phosphate + diphosphate. Its pathway is cofactor biosynthesis; thiamine diphosphate biosynthesis; thiamine phosphate from 4-amino-2-methyl-5-diphosphomethylpyrimidine and 4-methyl-5-(2-phosphoethyl)-thiazole: step 1/1. Functionally, condenses 4-methyl-5-(beta-hydroxyethyl)thiazole monophosphate (THZ-P) and 2-methyl-4-amino-5-hydroxymethyl pyrimidine pyrophosphate (HMP-PP) to form thiamine monophosphate (TMP). The protein is Thiamine-phosphate synthase of Coprothermobacter proteolyticus (strain ATCC 35245 / DSM 5265 / OCM 4 / BT).